The following is a 227-amino-acid chain: Phosphatidylserine decarboxylase proenzyme (227 aa).

Serine 181 functions as the Schiff-base intermediate with substrate; via pyruvic acid in the catalytic mechanism. Serine 181 carries the post-translational modification Pyruvic acid (Ser); by autocatalysis.

This sequence belongs to the phosphatidylserine decarboxylase family. PSD-A subfamily. As to quaternary structure, heterodimer of a large membrane-associated beta subunit and a small pyruvoyl-containing alpha subunit. Pyruvate is required as a cofactor. Is synthesized initially as an inactive proenzyme. Formation of the active enzyme involves a self-maturation process in which the active site pyruvoyl group is generated from an internal serine residue via an autocatalytic post-translational modification. Two non-identical subunits are generated from the proenzyme in this reaction, and the pyruvate is formed at the N-terminus of the alpha chain, which is derived from the carboxyl end of the proenzyme. The post-translation cleavage follows an unusual pathway, termed non-hydrolytic serinolysis, in which the side chain hydroxyl group of the serine supplies its oxygen atom to form the C-terminus of the beta chain, while the remainder of the serine residue undergoes an oxidative deamination to produce ammonia and the pyruvoyl prosthetic group on the alpha chain.

It is found in the cell membrane. The catalysed reaction is a 1,2-diacyl-sn-glycero-3-phospho-L-serine + H(+) = a 1,2-diacyl-sn-glycero-3-phosphoethanolamine + CO2. It participates in phospholipid metabolism; phosphatidylethanolamine biosynthesis; phosphatidylethanolamine from CDP-diacylglycerol: step 2/2. Its function is as follows. Catalyzes the formation of phosphatidylethanolamine (PtdEtn) from phosphatidylserine (PtdSer). This Anaplasma phagocytophilum (strain HZ) protein is Phosphatidylserine decarboxylase proenzyme.